A 200-amino-acid polypeptide reads, in one-letter code: LexA repressor (200 aa).

Residues 28 to 48 (RAEIAQHFGFSSPNAAEQHLK) constitute a DNA-binding region (H-T-H motif). Catalysis depends on for autocatalytic cleavage activity residues serine 117 and lysine 154.

This sequence belongs to the peptidase S24 family. Homodimer.

The enzyme catalyses Hydrolysis of Ala-|-Gly bond in repressor LexA.. Its function is as follows. Represses a number of genes involved in the response to DNA damage (SOS response), including recA and lexA. In the presence of single-stranded DNA, RecA interacts with LexA causing an autocatalytic cleavage which disrupts the DNA-binding part of LexA, leading to derepression of the SOS regulon and eventually DNA repair. The sequence is that of LexA repressor from Thiobacillus denitrificans (strain ATCC 25259 / T1).